We begin with the raw amino-acid sequence, 4158 residues long: Dynein axonemal heavy chain 6 (4158 aa).

Residues 1–1433 (MTFRATDSEF…VARMALSQYT (1433 aa)) form a stem region. ATP is bound at residue 192–199 (IIRENEHL). Residues 805 to 859 (CVHLGSDLEELNNEVNEVKLQAQDPQILDISADQDKIRLILNNLQSVLADLQKRA) are a coiled coil. 4 AAA regions span residues 1434–1655 (YGYE…VLVM), 1715–1948 (STIV…KKCS), 2058–2306 (KYNR…CVQG), and 2408–2659 (DYNL…LRRR). Residues 1472–1479 (GPAGTGKT), 1753–1760 (GPTGGGKT), 2096–2103 (GITGVGKS), and 2447–2454 (GVGGTGKQ) each bind ATP. Residues 2676 to 2961 (SMLSEKRKQI…KTMALTKARL (286 aa)) form a stalk region. Residues 2901–2996 (KRQKLRAAQA…EEISNITGNV (96 aa)) are a coiled coil. AAA stretches follow at residues 3042-3272 (LGDP…AIKT) and 3509-3730 (LTDF…NLKL).

This sequence belongs to the dynein heavy chain family. The dynein complex consists of at least two heavy chains and a number of intermediate and light chains. Expressed in several tissues, including brain, pituitary, testis and trachea, with highest levels in testis.

The protein localises to the cytoplasm. The protein resides in the cytoskeleton. It is found in the cilium axoneme. In terms of biological role, force generating protein of respiratory cilia. Produces force towards the minus ends of microtubules. Dynein has ATPase activity; the force-producing power stroke is thought to occur on release of ADP. This chain is Dynein axonemal heavy chain 6, found in Homo sapiens (Human).